Consider the following 149-residue polypeptide: D-aminoacyl-tRNA deacylase (149 aa).

The short motif at 137-138 is the Gly-cisPro motif, important for rejection of L-amino acids element; sequence GP.

Belongs to the DTD family. In terms of assembly, homodimer.

It localises to the cytoplasm. The catalysed reaction is glycyl-tRNA(Ala) + H2O = tRNA(Ala) + glycine + H(+). It carries out the reaction a D-aminoacyl-tRNA + H2O = a tRNA + a D-alpha-amino acid + H(+). In terms of biological role, an aminoacyl-tRNA editing enzyme that deacylates mischarged D-aminoacyl-tRNAs. Also deacylates mischarged glycyl-tRNA(Ala), protecting cells against glycine mischarging by AlaRS. Acts via tRNA-based rather than protein-based catalysis; rejects L-amino acids rather than detecting D-amino acids in the active site. By recycling D-aminoacyl-tRNA to D-amino acids and free tRNA molecules, this enzyme counteracts the toxicity associated with the formation of D-aminoacyl-tRNA entities in vivo and helps enforce protein L-homochirality. In Clostridium botulinum (strain Eklund 17B / Type B), this protein is D-aminoacyl-tRNA deacylase.